The primary structure comprises 511 residues: Lysine--tRNA ligase (511 aa).

The segment at 1 to 20 (MQKNTSQPTNTNEQSNQPSL) is disordered. Mg(2+) is bound by residues Glu422 and Glu429.

It belongs to the class-II aminoacyl-tRNA synthetase family. Homodimer. It depends on Mg(2+) as a cofactor.

The protein resides in the cytoplasm. It carries out the reaction tRNA(Lys) + L-lysine + ATP = L-lysyl-tRNA(Lys) + AMP + diphosphate. The chain is Lysine--tRNA ligase from Chlorobium chlorochromatii (strain CaD3).